A 357-amino-acid chain; its full sequence is UDP-N-acetylglucosamine--N-acetylmuramyl-(pentapeptide) pyrophosphoryl-undecaprenol N-acetylglucosamine transferase (357 aa).

UDP-N-acetyl-alpha-D-glucosamine-binding positions include 13 to 15 (SAG), Arg-166, Ser-196, and Gln-291.

Belongs to the glycosyltransferase 28 family. MurG subfamily.

Its subcellular location is the cell membrane. It catalyses the reaction di-trans,octa-cis-undecaprenyl diphospho-N-acetyl-alpha-D-muramoyl-L-alanyl-D-glutamyl-meso-2,6-diaminopimeloyl-D-alanyl-D-alanine + UDP-N-acetyl-alpha-D-glucosamine = di-trans,octa-cis-undecaprenyl diphospho-[N-acetyl-alpha-D-glucosaminyl-(1-&gt;4)]-N-acetyl-alpha-D-muramoyl-L-alanyl-D-glutamyl-meso-2,6-diaminopimeloyl-D-alanyl-D-alanine + UDP + H(+). It functions in the pathway cell wall biogenesis; peptidoglycan biosynthesis. In terms of biological role, cell wall formation. Catalyzes the transfer of a GlcNAc subunit on undecaprenyl-pyrophosphoryl-MurNAc-pentapeptide (lipid intermediate I) to form undecaprenyl-pyrophosphoryl-MurNAc-(pentapeptide)GlcNAc (lipid intermediate II). The polypeptide is UDP-N-acetylglucosamine--N-acetylmuramyl-(pentapeptide) pyrophosphoryl-undecaprenol N-acetylglucosamine transferase (Clostridium perfringens (strain ATCC 13124 / DSM 756 / JCM 1290 / NCIMB 6125 / NCTC 8237 / Type A)).